Here is a 206-residue protein sequence, read N- to C-terminus: MKGKILFALFLSAGVIACQPASQAAKQQEVKVAKAETKTKKKESKAEKFRKALAAQDKWQKACSNPVQIAPEGVDVAQFIKEMKATIKYPEDGNVVGDWRKGESLALLKKEYKALYGKKGGSKKGNCYACHCGDPRIIACGNIGPSLRGYGNKGIDPKMTYERIYNPWSQVPCSTMFRFGYHGLLTPEEIADIVAYLHDPESPINK.

The signal sequence occupies residues M1 to A17. C18 carries the N-palmitoyl cysteine lipid modification. Residue C18 is the site of S-diacylglycerol cysteine attachment. Residues A21–K58 adopt a coiled-coil conformation. Residues G97–E201 enclose the Cytochrome c domain. Heme c contacts are provided by C127, C130, and H131.

The protein resides in the cell membrane. This is an uncharacterized protein from Aquifex aeolicus (strain VF5).